Reading from the N-terminus, the 147-residue chain is Hemoglobin subunit beta-1 (147 aa).

At Val2 the chain carries N-acetylvaline. The Globin domain maps to 3–147 (HLTDAEKAAV…VASALAHKYH (145 aa)). Lys18 bears the N6-succinyllysine mark. Ser45, Ser51, and Ser53 each carry phosphoserine. At Lys60 the chain carries N6-succinyllysine. Residues His64 and His93 each contribute to the heme b site. Arg105 carries the asymmetric dimethylarginine modification. The residue at position 124 (Thr124) is a Phosphothreonine.

The protein belongs to the globin family. As to quaternary structure, heterotetramer of two alpha chains and two beta chains. In terms of tissue distribution, red blood cells.

Involved in oxygen transport from the lung to the various peripheral tissues. The polypeptide is Hemoglobin subunit beta-1 (Hbb) (Rattus norvegicus (Rat)).